The sequence spans 451 residues: Phosphoglucosamine mutase (451 aa).

Ser101 acts as the Phosphoserine intermediate in catalysis. Residues Ser101, Asp240, Asp242, and Asp244 each contribute to the Mg(2+) site. A Phosphoserine modification is found at Ser101.

Belongs to the phosphohexose mutase family. Mg(2+) is required as a cofactor. Activated by phosphorylation.

The catalysed reaction is alpha-D-glucosamine 1-phosphate = D-glucosamine 6-phosphate. Its function is as follows. Catalyzes the conversion of glucosamine-6-phosphate to glucosamine-1-phosphate. This chain is Phosphoglucosamine mutase, found in Streptococcus pyogenes serotype M12 (strain MGAS2096).